A 210-amino-acid polypeptide reads, in one-letter code: Peroxynitrite isomerase (210 aa).

Residues 21 to 27 (GQWEGQG) carry the GXWXGXG motif. Position 190 (His190) interacts with heme b.

The protein belongs to the nitrobindin family. In terms of assembly, homodimer. Heme b is required as a cofactor.

The catalysed reaction is peroxynitrite = nitrate. Its pathway is nitrogen metabolism. In terms of biological role, heme-binding protein able to scavenge peroxynitrite and to protect free L-tyrosine against peroxynitrite-mediated nitration, by acting as a peroxynitrite isomerase that converts peroxynitrite to nitrate. Therefore, this protein likely plays a role in peroxynitrite sensing and in the detoxification of reactive nitrogen and oxygen species (RNS and ROS, respectively). Is able to bind nitric oxide (NO) in vitro, but may act as a sensor of peroxynitrite levels in vivo. This chain is Peroxynitrite isomerase, found in Renibacterium salmoninarum (strain ATCC 33209 / DSM 20767 / JCM 11484 / NBRC 15589 / NCIMB 2235).